A 189-amino-acid polypeptide reads, in one-letter code: Keratin-associated protein 5-2 (189 aa).

8 tandem repeats follow at residues 21 to 24, 27 to 30, 33 to 36, 134 to 137, 144 to 147, 159 to 162, 169 to 172, and 179 to 182. The tract at residues 27 to 182 is 8 X 4 AA repeats of C-C-X-P; the sequence is CCKPVCCCVP…CCCQSSCCAP (156 aa).

It belongs to the KRTAP type 5 family. As to quaternary structure, interacts with hair keratins.

Its function is as follows. In the hair cortex, hair keratin intermediate filaments are embedded in an interfilamentous matrix, consisting of hair keratin-associated protein (KRTAP), which are essential for the formation of a rigid and resistant hair shaft through their extensive disulfide bond cross-linking with abundant cysteine residues of hair keratins. The matrix proteins include the high-sulfur and high-glycine-tyrosine keratins. The chain is Keratin-associated protein 5-2 from Mus musculus (Mouse).